The following is a 90-amino-acid chain: Protein RALF-like 3 (90 aa).

The signal sequence occupies residues Met1–Ala29. Intrachain disulfides connect Cys59–Cys67 and Cys80–Cys86.

This sequence belongs to the plant rapid alkalinization factor (RALF) family.

The protein localises to the secreted. In terms of biological role, cell signaling peptide that may regulate plant stress, growth, and development. Mediates a rapid alkalinization of extracellular space by mediating a transient increase in the cytoplasmic Ca(2+) concentration leading to a calcium-dependent signaling events through a cell surface receptor and a concomitant activation of some intracellular mitogen-activated protein kinases. The protein is Protein RALF-like 3 (RALFL3) of Arabidopsis thaliana (Mouse-ear cress).